The following is a 272-amino-acid chain: Shikimate dehydrogenase (NADP(+)) (272 aa).

Residues 14 to 16 (SLS) and threonine 61 contribute to the shikimate site. Lysine 65 acts as the Proton acceptor in catalysis. Shikimate is bound at residue aspartate 102. Residues 127 to 131 (GAGGA), 151 to 156 (NRTPSK), and leucine 215 each bind NADP(+). Residue tyrosine 217 participates in shikimate binding. Glycine 239 is an NADP(+) binding site.

This sequence belongs to the shikimate dehydrogenase family. As to quaternary structure, homodimer.

The catalysed reaction is shikimate + NADP(+) = 3-dehydroshikimate + NADPH + H(+). Its pathway is metabolic intermediate biosynthesis; chorismate biosynthesis; chorismate from D-erythrose 4-phosphate and phosphoenolpyruvate: step 4/7. Functionally, involved in the biosynthesis of the chorismate, which leads to the biosynthesis of aromatic amino acids. Catalyzes the reversible NADPH linked reduction of 3-dehydroshikimate (DHSA) to yield shikimate (SA). This Coxiella burnetii (strain Dugway 5J108-111) protein is Shikimate dehydrogenase (NADP(+)).